Here is a 283-residue protein sequence, read N- to C-terminus: 2-heptyl-4(1H)-quinolone synthase subunit PqsB (283 aa).

Belongs to the thiolase-like superfamily. FabH family. Forms a tight complex with PqsC.

The protein resides in the cytoplasm. Activity of the complex is inhibited by 2-aminoacetophenone (2-AA). In terms of biological role, required for the biosynthesis of the quorum-sensing signaling molecules 2-heptyl-4(1H)-quinolone (HHQ) and 2-heptyl-3-hydroxy-4(1H)-quinolone (Pseudomonas quinolone signal or PQS), which are important for biofilm formation and virulence. The PqsC/PqsB complex catalyzes the condensation of 2-aminobenzoylacetate (2-ABA) and octanoyl-CoA to form HHQ. PqsB, together with PqsC, catalyzes the coupling of 2-ABA with the octanoate group, leading to decarboxylation and dehydration, and resulting in closure of the quinoline ring. PqsB is probably required for the proper folding of PqsC rather than for a direct enzymatic role in the process. This is 2-heptyl-4(1H)-quinolone synthase subunit PqsB from Pseudomonas aeruginosa (strain ATCC 15692 / DSM 22644 / CIP 104116 / JCM 14847 / LMG 12228 / 1C / PRS 101 / PAO1).